A 583-amino-acid chain; its full sequence is Leucine aminopeptidase 2, chloroplastic (583 aa).

Residues 1–70 (MAVTLVTSFA…ISHATLGLTQ (70 aa)) constitute a chloroplast transit peptide. Residues Lys351 and Asp356 each coordinate Mn(2+). Lys363 is a catalytic residue. Mn(2+) is bound by residues Asp376, Asp436, and Glu438. Residue Arg440 is part of the active site.

It belongs to the peptidase M17 family. Homohexamer (dimer of homotrimers). Mn(2+) serves as cofactor.

The protein resides in the plastid. It is found in the chloroplast. It catalyses the reaction Release of an N-terminal amino acid, Xaa-|-Yaa-, in which Xaa is preferably Leu, but may be other amino acids including Pro although not Arg or Lys, and Yaa may be Pro. Amino acid amides and methyl esters are also readily hydrolyzed, but rates on arylamides are exceedingly low.. The enzyme catalyses Release of N-terminal proline from a peptide.. In terms of biological role, presumably involved in the processing and regular turnover of intracellular proteins. Catalyzes the removal of unsubstituted N-terminal amino acids from various peptides. Possesses leucine aminopeptidase activity against the model substrate leucine-amido methyl coumarin. Does not seem to possess Cys-Gly dipeptidase activity. Its function is as follows. Functions as a molecular chaperone to protect proteins from heat-induced damage. The protein is Leucine aminopeptidase 2, chloroplastic of Arabidopsis thaliana (Mouse-ear cress).